The chain runs to 359 residues: Aminomethyltransferase (359 aa).

The protein belongs to the GcvT family. In terms of assembly, the glycine cleavage system is composed of four proteins: P, T, L and H.

It catalyses the reaction N(6)-[(R)-S(8)-aminomethyldihydrolipoyl]-L-lysyl-[protein] + (6S)-5,6,7,8-tetrahydrofolate = N(6)-[(R)-dihydrolipoyl]-L-lysyl-[protein] + (6R)-5,10-methylene-5,6,7,8-tetrahydrofolate + NH4(+). Its function is as follows. The glycine cleavage system catalyzes the degradation of glycine. This chain is Aminomethyltransferase, found in Pseudoalteromonas atlantica (strain T6c / ATCC BAA-1087).